The chain runs to 363 residues: Phosphoserine aminotransferase (363 aa).

Arg41 provides a ligand contact to L-glutamate. Pyridoxal 5'-phosphate-binding positions include 75-76 (AS), Trp100, Thr155, Asp175, and Gln198. Lys199 bears the N6-(pyridoxal phosphate)lysine mark. 239–240 (NT) lines the pyridoxal 5'-phosphate pocket.

It belongs to the class-V pyridoxal-phosphate-dependent aminotransferase family. SerC subfamily. In terms of assembly, homodimer. Pyridoxal 5'-phosphate serves as cofactor.

It is found in the cytoplasm. It carries out the reaction O-phospho-L-serine + 2-oxoglutarate = 3-phosphooxypyruvate + L-glutamate. It catalyses the reaction 4-(phosphooxy)-L-threonine + 2-oxoglutarate = (R)-3-hydroxy-2-oxo-4-phosphooxybutanoate + L-glutamate. Its pathway is amino-acid biosynthesis; L-serine biosynthesis; L-serine from 3-phospho-D-glycerate: step 2/3. Functionally, catalyzes the reversible conversion of 3-phosphohydroxypyruvate to phosphoserine and of 3-hydroxy-2-oxo-4-phosphonooxybutanoate to phosphohydroxythreonine. The chain is Phosphoserine aminotransferase from Streptococcus agalactiae serotype III (strain NEM316).